Reading from the N-terminus, the 213-residue chain is Pyrrolidone-carboxylate peptidase (213 aa).

Catalysis depends on residues Glu-78, Cys-141, and His-165.

This sequence belongs to the peptidase C15 family. Homotetramer.

The protein localises to the cytoplasm. It catalyses the reaction Release of an N-terminal pyroglutamyl group from a polypeptide, the second amino acid generally not being Pro.. Functionally, removes 5-oxoproline from various penultimate amino acid residues except L-proline. The chain is Pyrrolidone-carboxylate peptidase from Enterococcus faecalis (strain ATCC 700802 / V583).